A 346-amino-acid chain; its full sequence is Phosphate acyltransferase (346 aa).

Belongs to the PlsX family. Homodimer. Probably interacts with PlsY.

Its subcellular location is the cytoplasm. The enzyme catalyses a fatty acyl-[ACP] + phosphate = an acyl phosphate + holo-[ACP]. It functions in the pathway lipid metabolism; phospholipid metabolism. Catalyzes the reversible formation of acyl-phosphate (acyl-PO(4)) from acyl-[acyl-carrier-protein] (acyl-ACP). This enzyme utilizes acyl-ACP as fatty acyl donor, but not acyl-CoA. The sequence is that of Phosphate acyltransferase from Brucella ovis (strain ATCC 25840 / 63/290 / NCTC 10512).